The primary structure comprises 451 residues: UBP1-associated protein 2B (451 aa).

The segment at Met-1 to Pro-86 is disordered. Basic and acidic residues-rich tracts occupy residues Cys-25–Gln-38 and Asp-49–Asp-63. The span at Ala-67–Gly-77 shows a compositional bias: polar residues. 2 consecutive RRM domains span residues Arg-128–Ala-236 and Arg-227–His-314. Disordered regions lie at residues Ala-302–Ala-335 and Gly-423–Arg-451. The segment covering Gly-431 to Arg-451 has biased composition (gly residues).

In terms of tissue distribution, expressed in shoot meristem and flowers.

Its subcellular location is the nucleus. Functionally, heterogeneous nuclear ribonucleoprotein (hnRNP)-like protein that acts as a component of a complex regulating the turnover of mRNAs in the nucleus. Binds with high affinity to RNA molecules that contain U-rich sequences in 3'-UTRs. May function in complex with UBP1 and contribute to the stabilization of mRNAs in the nucleus. The chain is UBP1-associated protein 2B (UBA2B) from Arabidopsis thaliana (Mouse-ear cress).